Consider the following 68-residue polypeptide: MSISARNQLKGKVVGLKKGVVTAEVVLEIAGGNKITSIISLDSVEELGVKEGAELTAVVKSTDVMILA.

The Mop domain occupies 2–68 (SISARNQLKG…VKSTDVMILA (67 aa)).

Functionally, binds one mole of molybdenum per mole of protein and contains a pterin. This is Molybdenum-pterin-binding protein 2 (mopII) from Clostridium pasteurianum.